The following is a 415-amino-acid chain: Serine/threonine transporter SstT (415 aa).

8 helical membrane-spanning segments follow: residues 21–41 (ILLG…AALA), 45–65 (LGTL…LVLV), 85–105 (FLYL…SVLF), 142–162 (ALLN…GIAF), 193–213 (LGIF…ALWG), 217–237 (LLMV…PLIV), 289–309 (VAIP…ITVL), and 331–351 (VVAS…LLLI).

It belongs to the dicarboxylate/amino acid:cation symporter (DAACS) (TC 2.A.23) family.

It is found in the cell inner membrane. The enzyme catalyses L-serine(in) + Na(+)(in) = L-serine(out) + Na(+)(out). The catalysed reaction is L-threonine(in) + Na(+)(in) = L-threonine(out) + Na(+)(out). In terms of biological role, involved in the import of serine and threonine into the cell, with the concomitant import of sodium (symport system). In Pectobacterium atrosepticum (strain SCRI 1043 / ATCC BAA-672) (Erwinia carotovora subsp. atroseptica), this protein is Serine/threonine transporter SstT.